Reading from the N-terminus, the 402-residue chain is CCA-adding enzyme (402 aa).

2 residues coordinate ATP: G32 and R35. Residues G32 and R35 each coordinate CTP. The Mg(2+) site is built by D45 and D47. Residues R116, D159, R162, R165, and R168 each contribute to the ATP site. Residues R116, D159, R162, R165, and R168 each coordinate CTP.

The protein belongs to the tRNA nucleotidyltransferase/poly(A) polymerase family. Bacterial CCA-adding enzyme type 3 subfamily. As to quaternary structure, homodimer. It depends on Mg(2+) as a cofactor.

The catalysed reaction is a tRNA precursor + 2 CTP + ATP = a tRNA with a 3' CCA end + 3 diphosphate. It catalyses the reaction a tRNA with a 3' CCA end + 2 CTP + ATP = a tRNA with a 3' CCACCA end + 3 diphosphate. Catalyzes the addition and repair of the essential 3'-terminal CCA sequence in tRNAs without using a nucleic acid template. Adds these three nucleotides in the order of C, C, and A to the tRNA nucleotide-73, using CTP and ATP as substrates and producing inorganic pyrophosphate. tRNA 3'-terminal CCA addition is required both for tRNA processing and repair. Also involved in tRNA surveillance by mediating tandem CCA addition to generate a CCACCA at the 3' terminus of unstable tRNAs. While stable tRNAs receive only 3'-terminal CCA, unstable tRNAs are marked with CCACCA and rapidly degraded. The polypeptide is CCA-adding enzyme (Streptococcus pyogenes serotype M2 (strain MGAS10270)).